The sequence spans 116 residues: Ribonuclease P protein component (116 aa).

The protein belongs to the RnpA family. In terms of assembly, consists of a catalytic RNA component (M1 or rnpB) and a protein subunit.

The enzyme catalyses Endonucleolytic cleavage of RNA, removing 5'-extranucleotides from tRNA precursor.. RNaseP catalyzes the removal of the 5'-leader sequence from pre-tRNA to produce the mature 5'-terminus. It can also cleave other RNA substrates such as 4.5S RNA. The protein component plays an auxiliary but essential role in vivo by binding to the 5'-leader sequence and broadening the substrate specificity of the ribozyme. The sequence is that of Ribonuclease P protein component from Leuconostoc mesenteroides subsp. mesenteroides (strain ATCC 8293 / DSM 20343 / BCRC 11652 / CCM 1803 / JCM 6124 / NCDO 523 / NBRC 100496 / NCIMB 8023 / NCTC 12954 / NRRL B-1118 / 37Y).